The following is a 249-amino-acid chain: Probable transcriptional regulatory protein IL1088 (249 aa).

The protein belongs to the TACO1 family.

It localises to the cytoplasm. This chain is Probable transcriptional regulatory protein IL1088, found in Idiomarina loihiensis (strain ATCC BAA-735 / DSM 15497 / L2-TR).